A 37-amino-acid polypeptide reads, in one-letter code: Large ribosomal subunit protein bL36 (37 aa).

This sequence belongs to the bacterial ribosomal protein bL36 family.

The sequence is that of Large ribosomal subunit protein bL36 from Campylobacter jejuni subsp. jejuni serotype O:6 (strain 81116 / NCTC 11828).